We begin with the raw amino-acid sequence, 415 residues long: tRNA(Met) cytidine acetate ligase (415 aa).

ATP-binding positions include 7–20 (VVEY…HRYH), Gly-101, Asn-162, and 187–188 (RI).

This sequence belongs to the TmcAL family.

It is found in the cytoplasm. The enzyme catalyses cytidine(34) in elongator tRNA(Met) + acetate + ATP = N(4)-acetylcytidine(34) in elongator tRNA(Met) + AMP + diphosphate. Catalyzes the formation of N(4)-acetylcytidine (ac(4)C) at the wobble position of elongator tRNA(Met), using acetate and ATP as substrates. First activates an acetate ion to form acetyladenylate (Ac-AMP) and then transfers the acetyl group to tRNA to form ac(4)C34. The polypeptide is tRNA(Met) cytidine acetate ligase (Bacillus velezensis (strain DSM 23117 / BGSC 10A6 / LMG 26770 / FZB42) (Bacillus amyloliquefaciens subsp. plantarum)).